A 217-amino-acid polypeptide reads, in one-letter code: Large ribosomal subunit protein uL3 (217 aa).

The interval 131-155 is disordered; that stretch reads FSSSRASHGNSRSHNVPGSIGMAQD. Low complexity predominate over residues 132–145; it reads SSSRASHGNSRSHN. The residue at position 154 (Q154) is an N5-methylglutamine.

This sequence belongs to the universal ribosomal protein uL3 family. In terms of assembly, part of the 50S ribosomal subunit. Forms a cluster with proteins L14 and L19. Post-translationally, methylated by PrmB.

Functionally, one of the primary rRNA binding proteins, it binds directly near the 3'-end of the 23S rRNA, where it nucleates assembly of the 50S subunit. The chain is Large ribosomal subunit protein uL3 from Nitrosomonas eutropha (strain DSM 101675 / C91 / Nm57).